The primary structure comprises 510 residues: Probable gamma-aminobutyrate transaminase 3, mitochondrial (510 aa).

A mitochondrion-targeting transit peptide spans 1 to 41 (MICRSLLLLRSNAASKASSIVKHVAATGCLPEYSSEAPARY). 166 to 167 (GS) serves as a coordination point for pyridoxal 5'-phosphate. A substrate-binding site is contributed by Tyr-199. Residue Asp-306 participates in pyridoxal 5'-phosphate binding. Lys-335 is a binding site for substrate. Lys-335 bears the N6-(pyridoxal phosphate)lysine mark.

It belongs to the class-III pyridoxal-phosphate-dependent aminotransferase family.

It is found in the mitochondrion. The catalysed reaction is 4-aminobutanoate + pyruvate = succinate semialdehyde + L-alanine. It carries out the reaction 4-aminobutanoate + glyoxylate = succinate semialdehyde + glycine. Its function is as follows. Transaminase that degrades gamma-amino butyric acid (GABA). This chain is Probable gamma-aminobutyrate transaminase 3, mitochondrial, found in Oryza sativa subsp. indica (Rice).